A 345-amino-acid chain; its full sequence is EWRFSRIHCDIFVTLDVMMCTASILNLCAISIDRYTAVAMPMLYNTRYSSKRRVTVMISVVWVLSFAISCPLLFGLNNTASTVCIIDNPAFVIYSSIVSFYVPFIVTLLVYVQIYIVLRKRRKRVNTKRNSHGVGVDAHKDKCTHPEDVKLCAVFVKSNGSFPAEKKKVEAGNHPEDMEMEMMSSTSPPEKTKHKSASPEHQLAVPATSNQCNNVNLPTPVNSPYKAENNGHSKDSTQPAKVFEIQSMPNGKTRTSIKTMSKRKISQHKEKKATQMLAIVLGVFIICWLPFFITHILNMHCNCNIPQALYSAFTWLGYVNSAVNPIIYTTFNVEFRKAFIKILHC.

Topologically, residues 1–10 are extracellular; sequence EWRFSRIHCD. The cysteines at positions 9 and 84 are disulfide-linked. The helical transmembrane segment at 11–32 threads the bilayer; it reads IFVTLDVMMCTASILNLCAISI. Residues 33-53 lie on the Cytoplasmic side of the membrane; it reads DRYTAVAMPMLYNTRYSSKRR. A helical membrane pass occupies residues 54-74; that stretch reads VTVMISVVWVLSFAISCPLLF. Residues 75–90 are Extracellular-facing; sequence GLNNTASTVCIIDNPA. A glycan (N-linked (GlcNAc...) asparagine) is linked at Asn-77. A helical transmembrane segment spans residues 91–115; sequence FVIYSSIVSFYVPFIVTLLVYVQIY. The Cytoplasmic portion of the chain corresponds to 116–275; that stretch reads IVLRKRRKRV…SQHKEKKATQ (160 aa). Over residues 166–177 the composition is skewed to basic and acidic residues; the sequence is KKKVEAGNHPED. The segment at 166-199 is disordered; it reads KKKVEAGNHPEDMEMEMMSSTSPPEKTKHKSASP. A helical membrane pass occupies residues 276 to 297; it reads MLAIVLGVFIICWLPFFITHIL. At 298 to 311 the chain is on the extracellular side; sequence NMHCNCNIPQALYS. A disulfide bond links Cys-301 and Cys-303. Residues 312–333 traverse the membrane as a helical segment; sequence AFTWLGYVNSAVNPIIYTTFNV. The Cytoplasmic portion of the chain corresponds to 334–345; that stretch reads EFRKAFIKILHC. The S-palmitoyl cysteine moiety is linked to residue Cys-345.

This sequence belongs to the G-protein coupled receptor 1 family. Palmitoylated. Palmitoylation is probably required for proper localization to the plasma membrane and stability of the receptor. As to expression, brain; pituitary.

It is found in the cell membrane. The protein localises to the golgi apparatus membrane. Functionally, this is one of the five types (D1 to D5) of receptors for dopamine. The activity of this receptor is mediated by G proteins which inhibits adenylyl cyclase. In Xenopus D2R is involved in the regulation of the melanotrope cells of the intermediate pituitary during background adaptation of the animal. This is D(2) dopamine receptor B (drd2-b) from Xenopus laevis (African clawed frog).